Reading from the N-terminus, the 1206-residue chain is Pre-mRNA-splicing factor prp12 (1206 aa).

The protein belongs to the RSE1 family. In terms of assembly, belongs to the 40S cdc5-associated complex (or cwf complex), a spliceosome sub-complex reminiscent of a late-stage spliceosome composed of the U2, U5 and U6 snRNAs and at least brr2, cdc5, cwf2/prp3, cwf3/syf1, cwf4/syf3, cwf5/ecm2, spp42/cwf6, cwf7/spf27, cwf8, cwf9, cwf10, cwf11, cwf12, prp45/cwf13, cwf14, cwf15, cwf16, cwf17, cwf18, cwf19, cwf20, cwf21, cwf22, cwf23, cwf24, cwf25, cwf26, cyp7/cwf27, cwf28, cwf29/ist3, lea1, msl1, prp5/cwf1, prp10, prp12/sap130, prp17, prp22, sap61, sap62, sap114, sap145, slu7, smb1, smd1, smd3, smf1, smg1 and syf2.

It localises to the nucleus. In terms of biological role, involved in mRNA splicing and G2/M transition. The protein is Pre-mRNA-splicing factor prp12 (prp12) of Schizosaccharomyces pombe (strain 972 / ATCC 24843) (Fission yeast).